The chain runs to 833 residues: Prickle-like protein 1 (833 aa).

A disordered region spans residues 1-22 (MPLEMDQKISKHTFGCQRSSTS). Positions 14–122 (FGCQRSSTSD…NIKMLSRAVM (109 aa)) constitute a PET domain. 3 LIM zinc-binding domains span residues 124–188 (AMCE…ELLK), 189–249 (PRCS…HYAE), and 250–313 (YCES…EDVH). 5 disordered regions span residues 312–346 (VHASDSSDSAFQSARSRESRRSVRMGKSSRSADQC), 432–456 (EDNRSNEHWMSDNIKGKNDLQRNSR), 603–702 (CQEK…ERNP), 767–786 (CSSSSSDSEEEGYFLGQPIP), and 805–833 (NALSSSQFSQRTTKSKKKKGHKGKNCIIS). Basic and acidic residues-rich tracts occupy residues 432–453 (EDNRSNEHWMSDNIKGKNDLQR) and 603–614 (CQEKPPPEEKPM). The segment covering 669 to 680 (RPHHHRRRKSRK) has biased composition (basic residues). Residues 817–833 (TKSKKKKGHKGKNCIIS) are compositionally biased toward basic residues. At Cys-830 the chain carries Cysteine methyl ester. Residue Cys-830 is the site of S-farnesyl cysteine attachment. Residues 831 to 833 (IIS) constitute a propeptide, removed in mature form.

Belongs to the prickle / espinas / testin family. In terms of assembly, interacts with dvl2/dsh and mapk8/jnk1.

The protein resides in the cell membrane. In terms of biological role, acts in a planar cell polarity (PCP) complex; polarization along the apical/basal axis of epithelial cells. Regulates the polarized assembly of fibronectrin on the surface of the mesoderm during gastrulation. Essential for gastrulation cell movements, cooperating with dvl2/dsh to activate jnk. Acts together with tes to control axial elongation. This is Prickle-like protein 1 from Xenopus tropicalis (Western clawed frog).